A 247-amino-acid chain; its full sequence is tRNA pseudouridine synthase A (247 aa).

Asp53 acts as the Nucleophile in catalysis. Position 112 (Tyr112) interacts with substrate.

The protein belongs to the tRNA pseudouridine synthase TruA family. In terms of assembly, homodimer.

The catalysed reaction is uridine(38/39/40) in tRNA = pseudouridine(38/39/40) in tRNA. Functionally, formation of pseudouridine at positions 38, 39 and 40 in the anticodon stem and loop of transfer RNAs. The chain is tRNA pseudouridine synthase A from Anaplasma marginale (strain Florida).